Here is a 994-residue protein sequence, read N- to C-terminus: Regulator of telomere elongation helicase 1 homolog (994 aa).

A Helicase ATP-binding domain is found at 15-324 (SKTSIKFPFE…KLIENLRTED (310 aa)). 50–57 (SPTGTGKT) is an ATP binding site. The [4Fe-4S] cluster site is built by Cys142, Cys160, Cys169, and Cys208. Positions 251–254 (DEAH) match the DEAH box motif. Basic and acidic residues predominate over residues 818-831 (KIEKKEKIEPRPIK). Residues 818-896 (KIEKKEKIEP…HVVSGSEPPK (79 aa)) are disordered. Residues 833–844 (DSSSSSVFSLPT) are compositionally biased toward polar residues. Basic and acidic residues predominate over residues 847–856 (DELKVKKWEQ). 2 stretches are compositionally biased toward polar residues: residues 859–869 (DSQTNVSSSSD) and 880–889 (PGNSSGQHVV).

Belongs to the helicase family. RAD3/XPD subfamily.

The protein resides in the nucleus. The catalysed reaction is ATP + H2O = ADP + phosphate + H(+). In terms of biological role, a probable ATP-dependent DNA helicase implicated in DNA repair and the maintenance of genomic stability. Acts as an anti-recombinase to counteract toxic recombination and limit crossover during meiosis. Regulates meiotic recombination and crossover homeostasis by physically dissociating strand invasion events and thereby promotes noncrossover repair by meiotic synthesis dependent strand annealing (SDSA) as well as disassembly of D loop recombination intermediates. This is Regulator of telomere elongation helicase 1 homolog from Caenorhabditis briggsae.